The primary structure comprises 223 residues: DNA mismatch repair protein MutH (223 aa).

Belongs to the MutH family.

The protein localises to the cytoplasm. Its function is as follows. Sequence-specific endonuclease that cleaves unmethylated GATC sequences. It is involved in DNA mismatch repair. The protein is DNA mismatch repair protein MutH of Haemophilus influenzae (strain 86-028NP).